We begin with the raw amino-acid sequence, 995 residues long: Translation initiation factor IF-2 (995 aa).

The tract at residues 53–399 is disordered; that stretch reads NNAGSPAPAA…SGAPRGQGQV (347 aa). Pro residues-rich tracts occupy residues 60 to 87 and 104 to 119; these read PAAPPAVAPPTPTPTPPRTPTPAPPPGG and TPGPKPKGPVPGPPQS. Over residues 135–160 the composition is skewed to low complexity; that stretch reads AAAEARAAALKAEQEAAVKAAQAARQ. Residues 161–171 are compositionally biased toward basic and acidic residues; the sequence is QQRENVRREPP. Over residues 177 to 192 the composition is skewed to pro residues; sequence RPGPRPGPGTMPPRPG. A compositionally biased stretch (low complexity) spans 193–202; that stretch reads SPAAGRSGAP. 2 stretches are compositionally biased toward pro residues: residues 203-213 and 242-264; these read APGPGPRPGGR and RPSPASMPPRPSPASMPPRPSPA. Gly residues predominate over residues 273 to 363; sequence RPGGPGSGRP…GAAGAFGRPG (91 aa). Residues 367–376 are compositionally biased toward basic residues; sequence TRGRKSKKQR. Positions 486–658 constitute a tr-type G domain; sequence SRPPVVTVMG…VLLTADASLE (173 aa). Residues 495-502 are G1; sequence GHVDHGKT. Residue 495-502 coordinates GTP; that stretch reads GHVDHGKT. The G2 stretch occupies residues 520–524; the sequence is GITQH. A G3 region spans residues 545 to 548; the sequence is DTPG. Residues 545 to 549 and 599 to 602 each bind GTP; these read DTPGH and NKID. The tract at residues 599–602 is G4; the sequence is NKID. Residues 635–637 form a G5 region; that stretch reads AAK.

This sequence belongs to the TRAFAC class translation factor GTPase superfamily. Classic translation factor GTPase family. IF-2 subfamily.

The protein localises to the cytoplasm. In terms of biological role, one of the essential components for the initiation of protein synthesis. Protects formylmethionyl-tRNA from spontaneous hydrolysis and promotes its binding to the 30S ribosomal subunits. Also involved in the hydrolysis of GTP during the formation of the 70S ribosomal complex. This is Translation initiation factor IF-2 from Salinispora arenicola (strain CNS-205).